A 395-amino-acid polypeptide reads, in one-letter code: Chorismate synthase (395 aa).

The NADP(+) site is built by arginine 40 and arginine 46. FMN-binding positions include 137 to 139 (RSS), glycine 308, 323 to 327 (KPLPT), and arginine 349.

This sequence belongs to the chorismate synthase family. Homotetramer. It depends on FMNH2 as a cofactor.

It carries out the reaction 5-O-(1-carboxyvinyl)-3-phosphoshikimate = chorismate + phosphate. Its pathway is metabolic intermediate biosynthesis; chorismate biosynthesis; chorismate from D-erythrose 4-phosphate and phosphoenolpyruvate: step 7/7. Its function is as follows. Catalyzes the anti-1,4-elimination of the C-3 phosphate and the C-6 proR hydrogen from 5-enolpyruvylshikimate-3-phosphate (EPSP) to yield chorismate, which is the branch point compound that serves as the starting substrate for the three terminal pathways of aromatic amino acid biosynthesis. This reaction introduces a second double bond into the aromatic ring system. The sequence is that of Chorismate synthase from Gloeobacter violaceus (strain ATCC 29082 / PCC 7421).